The primary structure comprises 390 residues: GDSL esterase/lipase At1g28580 (390 aa).

Positions 1-28 are cleaved as a signal peptide; sequence MAYPGSPILMKLLVFIFLSTFVVTNVSS. Residue Ser44 is the Nucleophile of the active site. N-linked (GlcNAc...) asparagine glycans are attached at residues Asn140 and Asn322. Active-site residues include Asp347 and His350.

Belongs to the 'GDSL' lipolytic enzyme family.

The protein localises to the secreted. This chain is GDSL esterase/lipase At1g28580, found in Arabidopsis thaliana (Mouse-ear cress).